The primary structure comprises 764 residues: Acylamino-acid-releasing enzyme (764 aa).

Active-site charge relay system residues include S618, D707, and H739.

This sequence belongs to the peptidase S9C family. In terms of assembly, homotetramer.

The protein resides in the cytoplasm. Its subcellular location is the nucleus. It carries out the reaction Cleavage of an N-acetyl or N-formyl amino acid from the N-terminus of a polypeptide.. With respect to regulation, strongly inhibited by the serine protease inhibitor diisopropyl fluorophosphate. In terms of biological role, catalyzes the hydrolysis of the N-terminal peptide bond of an N-acetylated peptide to generate an N-acetylated amino acid and a peptide with a free N-terminus. Can degrade the glycated RuBisCO (ribulose-1,5-bisphosphate carboxylase/oxygenase) protein but not the native protein. May be involved in the elimination of glycated proteins. Plays a homeostatic role in sustaining the cytoplasmic antioxidative system. May contribute to the elimination of the oxidized proteins in the cytoplasm. This chain is Acylamino-acid-releasing enzyme, found in Arabidopsis thaliana (Mouse-ear cress).